A 252-amino-acid chain; its full sequence is 2-succinyl-6-hydroxy-2,4-cyclohexadiene-1-carboxylate synthase (252 aa).

This sequence belongs to the AB hydrolase superfamily. MenH family. As to quaternary structure, monomer.

It carries out the reaction 5-enolpyruvoyl-6-hydroxy-2-succinyl-cyclohex-3-ene-1-carboxylate = (1R,6R)-6-hydroxy-2-succinyl-cyclohexa-2,4-diene-1-carboxylate + pyruvate. It functions in the pathway quinol/quinone metabolism; 1,4-dihydroxy-2-naphthoate biosynthesis; 1,4-dihydroxy-2-naphthoate from chorismate: step 3/7. The protein operates within quinol/quinone metabolism; menaquinone biosynthesis. In terms of biological role, catalyzes a proton abstraction reaction that results in 2,5-elimination of pyruvate from 2-succinyl-5-enolpyruvyl-6-hydroxy-3-cyclohexene-1-carboxylate (SEPHCHC) and the formation of 2-succinyl-6-hydroxy-2,4-cyclohexadiene-1-carboxylate (SHCHC). This Escherichia coli (strain ATCC 8739 / DSM 1576 / NBRC 3972 / NCIMB 8545 / WDCM 00012 / Crooks) protein is 2-succinyl-6-hydroxy-2,4-cyclohexadiene-1-carboxylate synthase.